The chain runs to 143 residues: Mediator of RNA polymerase II transcription subunit 22 (143 aa).

Belongs to the Mediator complex subunit 22 family. As to quaternary structure, component of the Mediator complex, which includes at least CDK8, MED4, MED6, MED11, MED14, MED17, MED18, MED20, MED21, MED22, MED27, MED28, MED30 and MED31.

The protein localises to the nucleus. Its function is as follows. Component of the Mediator complex, a coactivator involved in the regulated transcription of nearly all RNA polymerase II-dependent genes. Mediator functions as a bridge to convey information from gene-specific regulatory proteins to the basal RNA polymerase II transcription machinery. Mediator is recruited to promoters by direct interactions with regulatory proteins and serves as a scaffold for the assembly of a functional preinitiation complex with RNA polymerase II and the general transcription factors. This chain is Mediator of RNA polymerase II transcription subunit 22 (MED22), found in Drosophila melanogaster (Fruit fly).